The following is a 296-amino-acid chain: 4-hydroxy-tetrahydrodipicolinate synthase (296 aa).

Thr44 is a pyruvate binding site. Tyr132 serves as the catalytic Proton donor/acceptor. Lys162 serves as the catalytic Schiff-base intermediate with substrate. Ile204 is a pyruvate binding site.

The protein belongs to the DapA family. In terms of assembly, homotetramer; dimer of dimers.

Its subcellular location is the cytoplasm. The enzyme catalyses L-aspartate 4-semialdehyde + pyruvate = (2S,4S)-4-hydroxy-2,3,4,5-tetrahydrodipicolinate + H2O + H(+). The protein operates within amino-acid biosynthesis; L-lysine biosynthesis via DAP pathway; (S)-tetrahydrodipicolinate from L-aspartate: step 3/4. Functionally, catalyzes the condensation of (S)-aspartate-beta-semialdehyde [(S)-ASA] and pyruvate to 4-hydroxy-tetrahydrodipicolinate (HTPA). The sequence is that of 4-hydroxy-tetrahydrodipicolinate synthase from Novosphingobium aromaticivorans (strain ATCC 700278 / DSM 12444 / CCUG 56034 / CIP 105152 / NBRC 16084 / F199).